The primary structure comprises 262 residues: Global transcriptional regulator CodY (262 aa).

Residues 1 to 159 (MAHLLEKTRK…ASTVVGIQLL (159 aa)) form a GAF domain region. The H-T-H motif DNA-binding region spans 207 to 226 (ASVIADRIGITRSVIVNALR).

Belongs to the CodY family.

The protein resides in the cytoplasm. DNA-binding global transcriptional regulator which is involved in the adaptive response to starvation and acts by directly or indirectly controlling the expression of numerous genes in response to nutrient availability. During rapid exponential growth, CodY is highly active and represses genes whose products allow adaptation to nutrient depletion. The chain is Global transcriptional regulator CodY from Streptococcus pneumoniae serotype 4 (strain ATCC BAA-334 / TIGR4).